Reading from the N-terminus, the 89-residue chain is Neuropeptide S (89 aa).

The first 23 residues, 1–23, serve as a signal peptide directing secretion; the sequence is MIGSLKLSFVLALSLSVMHVLWC. The propeptide occupies 24–69; the sequence is YPVLSSKVPGKPDYFLILLSSCPARLEGSDRLAFLKPILEKTSMKR.

The protein resides in the secreted. Its function is as follows. May play an important anorexigenic role. Modulates arousal and anxiety as well as increases locomotor activity. Binds to its receptor NPSR1 with nanomolar affinity to increase intracellular calcium concentrations. This is Neuropeptide S (Nps) from Mus musculus (Mouse).